Reading from the N-terminus, the 787-residue chain is Phenylalanine--tRNA ligase beta subunit (787 aa).

The tRNA-binding domain occupies 38–151 (GQDPAPFVVA…SDYEVGDSFF (114 aa)). A B5 domain is found at 397 to 474 (SEGRVISFNP…RMHGYDKVQE (78 aa)). 4 residues coordinate Mg(2+): Asp452, Asp458, Glu461, and Glu462. Residues 694 to 785 (HKYQPVKRDF…VAQKLGGELR (92 aa)) form the FDX-ACB domain.

It belongs to the phenylalanyl-tRNA synthetase beta subunit family. Type 1 subfamily. Tetramer of two alpha and two beta subunits. The cofactor is Mg(2+).

The protein localises to the cytoplasm. The enzyme catalyses tRNA(Phe) + L-phenylalanine + ATP = L-phenylalanyl-tRNA(Phe) + AMP + diphosphate + H(+). This chain is Phenylalanine--tRNA ligase beta subunit, found in Anaplasma marginale (strain St. Maries).